Reading from the N-terminus, the 159-residue chain is uncharacterized protein (159 aa).

Helical transmembrane passes span 59-79 (IGAL…ALVY) and 91-113 (VFSV…RRVC).

It is found in the cell membrane. This is an uncharacterized protein from Treponema pallidum (strain Nichols).